Here is a 260-residue protein sequence, read N- to C-terminus: uncharacterized protein (260 aa).

A Radical SAM core domain is found at 6-239 (AGVRSGVVVS…VAVAETYLPN (234 aa)).

This is an uncharacterized protein from Sinorhizobium fredii (strain NBRC 101917 / NGR234).